The primary structure comprises 167 residues: CS6 fimbrial subunit B (167 aa).

Residues Met1–Ala21 form the signal peptide.

It localises to the fimbrium. The protein is CS6 fimbrial subunit B (cssB) of Escherichia coli.